We begin with the raw amino-acid sequence, 401 residues long: Dynactin subunit 2 (401 aa).

The disordered stretch occupies residues methionine 1–leucine 25. Alanine 2 is modified (N-acetylalanine). Position 6 is a phosphotyrosine (tyrosine 6). At serine 83 the chain carries Phosphoserine. Tyrosine 86 carries the phosphotyrosine modification. Residues proline 99–lysine 132 are a coiled coil. 2 positions are modified to phosphothreonine: threonine 134 and threonine 198. Residues glutamate 214–alanine 244 are a coiled coil. The residue at position 320 (serine 320) is a Phosphoserine. Positions arginine 379–leucine 399 form a coiled coil.

This sequence belongs to the dynactin subunit 2 family. As to quaternary structure, subunit of dynactin, a multiprotein complex part of a tripartite complex with dynein and a adapter, such as BICDL1, BICD2 or HOOK3. The dynactin complex is built around ACTR1A/ACTB filament and consists of an actin-related filament composed of a shoulder domain, a pointed end and a barbed end. Its length is defined by its flexible shoulder domain. The soulder is composed of 2 DCTN1 subunits, 4 DCTN2 and 2 DCTN3. The 4 DCNT2 (via N-terminus) bind the ACTR1A filament and act as molecular rulers to determine the length. The pointed end is important for binding dynein-dynactin cargo adapters and consists of 4 subunits: ACTR10, DCNT4, DCTN5 and DCTN6. The barbed end is composed of a CAPZA1:CAPZB heterodimers, which binds ACTR1A/ACTB filament and dynactin and stabilizes dynactin. Interacts with BICD2 and CEP135. Interacts with DYNAP. Interacts with ECPAS. Interacts with MAPRE1.

It localises to the cytoplasm. The protein resides in the cytoskeleton. Its subcellular location is the microtubule organizing center. It is found in the centrosome. The protein localises to the membrane. Part of the dynactin complex that activates the molecular motor dynein for ultra-processive transport along microtubules. In the dynactin soulder domain, binds the ACTR1A filament and acts as a molecular ruler to determine the length. Modulates cytoplasmic dynein binding to an organelle, and plays a role in prometaphase chromosome alignment and spindle organization during mitosis. Involved in anchoring microtubules to centrosomes. May play a role in synapse formation during brain development. This chain is Dynactin subunit 2, found in Homo sapiens (Human).